Here is a 642-residue protein sequence, read N- to C-terminus: MPVITLPDGSQRHYDHAVSPLDVALDIGPGLAKACIAGRVNGELVDASDKIDTDAQLAIITAKDEAGLEIIRHSCAHLLGHAIKQLWPDTKMAIGPVIDNGFYYDVDIDRTLTQEDIELLEKRMHELADTDYDVIKKKVSWQEARDAFAARGETYKMAILDENISRDDRPGLYHHEEYIDMCRGPHVPNMRFCHHFKLQKTSGAYWRGDSKNKMLQRIYGTAWADKKQLASYLQRLEEAAKRDHRKIGKQLDLYHMQEEAPGMVFWHNDGWTIFRELEAFVRMKLKSYQYQEVKGPFMMDRVMWEKTGHWENYKEAMFTTSSENREYCIKPMNCPGHVQIFNQGLKSYRDLPLRMAEFGSCHRNEPSGSLHGLMRVRGFTQDDAHIFCTEEQVRDEVNSCIKMVYDMYSTFGFEKIVVKLSTRPEKRIGSDEMWDRAEADLAAALTENNIEFDYQPGEGAFYGPKIEFTLHDCLDRAWQCGTVQLDFSLPGRLNASYVGESNERQVPVMIHRAILGSMERFIGILTEEFAGFFPTWLAPVQVVIMNITDTQSDYVNELTRKLQEAGIRVKADLRNEKIGFKIREHTLRRVPYMLVCGDKEVEAGKVAVRTRRGKDLGSLDVSEVISKLQQEIRSRSLHQLEE.

A TGS domain is found at 1 to 61 (MPVITLPDGS…DTDAQLAIIT (61 aa)). The catalytic stretch occupies residues 243 to 534 (DHRKIGKQLD…LTEEFAGFFP (292 aa)). Residues cysteine 334, histidine 385, and histidine 511 each coordinate Zn(2+).

This sequence belongs to the class-II aminoacyl-tRNA synthetase family. Homodimer. Zn(2+) is required as a cofactor.

It is found in the cytoplasm. The catalysed reaction is tRNA(Thr) + L-threonine + ATP = L-threonyl-tRNA(Thr) + AMP + diphosphate + H(+). Catalyzes the attachment of threonine to tRNA(Thr) in a two-step reaction: L-threonine is first activated by ATP to form Thr-AMP and then transferred to the acceptor end of tRNA(Thr). Also edits incorrectly charged L-seryl-tRNA(Thr). The chain is Threonine--tRNA ligase from Pectobacterium carotovorum subsp. carotovorum (strain PC1).